The following is a 381-amino-acid chain: Hydrogenase nickel incorporation protein HupN (381 aa).

The Cytoplasmic segment spans residues 1–39; that stretch reads MLPFSMTGLEKDHTRGVLILANAHRRSERSRTASCAGPA. Residues 40–60 traverse the membrane as a helical segment; it reads VLFGGLITANIVAWAWAFALF. Residues 61 to 63 are Periplasmic-facing; sequence ADR. A helical membrane pass occupies residues 64–84; that stretch reads PVVMATALLAWVFGLRHAVDA. At 85-110 the chain is on the cytoplasmic side; the sequence is DHIAAIDNVVRSLMQTGGTPRSAGLY. Residues 111 to 131 traverse the membrane as a helical segment; it reads FALGHSSVVVVATMLLALGVV. The Periplasmic segment spans residues 132 to 149; that stretch reads SLGGDGLLKEIGSFIGAS. Residues 150 to 170 form a helical membrane-spanning segment; it reads VSALFLLVIAAINLAIFASLW. The Cytoplasmic segment spans residues 171–215; that stretch reads RTFRKAREQGIRDAAGLDALLAHRGILVRLLGPMFRLVTKPWHMY. Residues 216–236 form a helical membrane-spanning segment; sequence PLGFLFGLGFDTATEIGLLSI. Topologically, residues 237-243 are periplasmic; the sequence is SASEAAR. The helical transmembrane segment at 244-264 threads the bilayer; the sequence is GASLADVMVFPALFAAGMALV. Over 265 to 292 the chain is Cytoplasmic; that stretch reads DTADSTLMVSAYRWAFVDPMRKLWYNLT. A helical membrane pass occupies residues 293-313; the sequence is ITGASVAVALFIGGIEALGLI. Residues 314–333 are Periplasmic-facing; sequence GNRLDLSGGVWTLIDALNES. The chain crosses the membrane as a helical span at residues 334–354; that stretch reads LANVGLAVIALFAIAWLLSIV. Topologically, residues 355–381 are cytoplasmic; it reads LYRRLIAGSSGLADTEVLECADATEAV.

The protein belongs to the NiCoT transporter (TC 2.A.52) family.

The protein resides in the cell inner membrane. Functionally, involved in nickel incorporation/metabolism into the hydrogenase apoprotein. This Bradyrhizobium diazoefficiens (strain JCM 10833 / BCRC 13528 / IAM 13628 / NBRC 14792 / USDA 110) protein is Hydrogenase nickel incorporation protein HupN (hupN).